We begin with the raw amino-acid sequence, 143 residues long: Transcriptional regulator MraZ (143 aa).

2 SpoVT-AbrB domains span residues 5-47 and 76-119; these read EYEH…PRGV and AADM…SPRR.

It belongs to the MraZ family. As to quaternary structure, forms oligomers.

Its subcellular location is the cytoplasm. The protein localises to the nucleoid. The protein is Transcriptional regulator MraZ of Roseiflexus castenholzii (strain DSM 13941 / HLO8).